A 448-amino-acid polypeptide reads, in one-letter code: Solute carrier family 52, riboflavin transporter, member 2 (448 aa).

The next 5 helical transmembrane spans lie at 14 to 34 (LLVA…WVEL), 47 to 67 (LPSY…VVTL), 79 to 99 (VPIQ…APLW), 105 to 125 (VAGQ…ALAC), and 147 to 167 (FFLG…VQGV). A glycan (N-linked (GlcNAc...) asparagine) is linked at Asn-178. Residues 198–218 (WALTALLVTSAAAFQGLLLLL) form a helical membrane-spanning segment. Positions 228 to 267 (GAGPELPLGSPGAEEEEKEEEEALPLQEPPSQAAGTIPGP) are disordered. The segment covering 240–250 (AEEEEKEEEEA) has biased composition (acidic residues). 5 helical membrane passes run 280 to 300 (AFLL…LPAV), 315 to 335 (LAVV…MGVL), 342 to 362 (LVGL…LAIL), 369 to 389 (VGTT…LCVF), and 407 to 427 (ALLA…GTMF).

It belongs to the riboflavin transporter family.

It localises to the cell membrane. The catalysed reaction is riboflavin(in) = riboflavin(out). Riboflavin transport is Na(+)-independent but moderately pH-sensitive. Activity is strongly inhibited by riboflavin analogs, such as lumiflavin. Weakly inhibited by flavin adenine dinucleotide (FAD) and flavin mononucleotide (FMN). In terms of biological role, plasma membrane transporter mediating the uptake by cells of the water soluble vitamin B2/riboflavin that plays a key role in biochemical oxidation-reduction reactions of the carbohydrate, lipid, and amino acid metabolism. May also act as a receptor for 4-hydroxybutyrate. Functionally, (Microbial infection) In case of infection by retroviruses, acts as a cell receptor to retroviral envelopes similar to the porcine endogenous retrovirus (PERV-A). The polypeptide is Solute carrier family 52, riboflavin transporter, member 2 (SLC52A2) (Papio hamadryas (Hamadryas baboon)).